We begin with the raw amino-acid sequence, 317 residues long: Acetyl-coenzyme A carboxylase carboxyl transferase subunit alpha (317 aa).

The 254-residue stretch at L40 to E293 folds into the CoA carboxyltransferase C-terminal domain.

It belongs to the AccA family. As to quaternary structure, acetyl-CoA carboxylase is a heterohexamer composed of biotin carboxyl carrier protein (AccB), biotin carboxylase (AccC) and two subunits each of ACCase subunit alpha (AccA) and ACCase subunit beta (AccD).

It is found in the cytoplasm. The enzyme catalyses N(6)-carboxybiotinyl-L-lysyl-[protein] + acetyl-CoA = N(6)-biotinyl-L-lysyl-[protein] + malonyl-CoA. Its pathway is lipid metabolism; malonyl-CoA biosynthesis; malonyl-CoA from acetyl-CoA: step 1/1. Its function is as follows. Component of the acetyl coenzyme A carboxylase (ACC) complex. First, biotin carboxylase catalyzes the carboxylation of biotin on its carrier protein (BCCP) and then the CO(2) group is transferred by the carboxyltransferase to acetyl-CoA to form malonyl-CoA. The polypeptide is Acetyl-coenzyme A carboxylase carboxyl transferase subunit alpha (Rhizobium etli (strain ATCC 51251 / DSM 11541 / JCM 21823 / NBRC 15573 / CFN 42)).